The chain runs to 375 residues: Trichodiene synthase (375 aa).

It belongs to the trichodiene synthase family.

The catalysed reaction is (2E,6E)-farnesyl diphosphate = trichodiene + diphosphate. It functions in the pathway sesquiterpene biosynthesis; trichothecene biosynthesis. TS is a member of the terpene cyclase group of enzymes. It catalyzes the isomerization and cyclization of farnesyl pyro-phosphate to form trichodiene, the first cyclic intermediate in the biosynthetic pathway for trichothecenes. It serves to branch trichothecene biosynthesis from the isoprenoid pathway. This Fusarium austroamericanum protein is Trichodiene synthase (TRI5).